The chain runs to 551 residues: Ubiquitin carboxyl-terminal hydrolase 24 (551 aa).

Disordered regions lie at residues 51-104 (NSSV…SLRV) and 163-188 (NEDF…TESV). Residues 197–551 (RGLINAGNLC…QAYVLFYKQV (355 aa)) form the USP domain. Residue Cys206 is the Nucleophile of the active site. Over residues 329–338 (SKSSVISSAN) the composition is skewed to polar residues. A disordered region spans residues 329 to 349 (SKSSVISSANDDGDEWETVGP). The active-site Proton acceptor is the His510.

It belongs to the peptidase C19 family.

The enzyme catalyses Thiol-dependent hydrolysis of ester, thioester, amide, peptide and isopeptide bonds formed by the C-terminal Gly of ubiquitin (a 76-residue protein attached to proteins as an intracellular targeting signal).. Its function is as follows. Recognizes and hydrolyzes the peptide bond at the C-terminal Gly of ubiquitin. Involved in the processing of poly-ubiquitin precursors as well as that of ubiquitinated proteins. In Arabidopsis thaliana (Mouse-ear cress), this protein is Ubiquitin carboxyl-terminal hydrolase 24 (UBP24).